A 1051-amino-acid polypeptide reads, in one-letter code: Exportin-T (1051 aa).

This sequence belongs to the exportin family.

The protein localises to the nucleus. It is found in the cytoplasm. TRNA nucleus export receptor which facilitates tRNA translocation across the nuclear pore complex. Involved in pre-tRNA splicing, probably by affecting the interaction of pre-tRNA with splicing endonuclease. The polypeptide is Exportin-T (LOS1) (Eremothecium gossypii (strain ATCC 10895 / CBS 109.51 / FGSC 9923 / NRRL Y-1056) (Yeast)).